The chain runs to 384 residues: Probable beta-1,3-galactosyltransferase 1 (384 aa).

Residues 21–43 traverse the membrane as a helical; Signal-anchor for type II membrane protein segment; that stretch reads SVFFMCLASFCLGMFFTNRMWNI. Residues N73 and N105 are each glycosylated (N-linked (GlcNAc...) asparagine).

It belongs to the glycosyltransferase 31 family. Mn(2+) is required as a cofactor.

Its subcellular location is the golgi apparatus membrane. It functions in the pathway protein modification; protein glycosylation. Beta-1,3-galactosyltransferase that transfers galactose from UDP-galactose to substrates with a terminal glycosyl residue. In Arabidopsis thaliana (Mouse-ear cress), this protein is Probable beta-1,3-galactosyltransferase 1 (B3GALT1).